The sequence spans 264 residues: S-adenosylmethionine decarboxylase proenzyme (264 aa).

Ser-112 acts as the Schiff-base intermediate with substrate; via pyruvic acid in catalysis. The residue at position 112 (Ser-112) is a Pyruvic acid (Ser); by autocatalysis. His-117 functions as the Proton acceptor; for processing activity in the catalytic mechanism. The active-site Proton donor; for catalytic activity is the Cys-140.

Belongs to the prokaryotic AdoMetDC family. Type 2 subfamily. Heterooctamer of four alpha and four beta chains arranged as a tetramer of alpha/beta heterodimers. Pyruvate serves as cofactor. In terms of processing, is synthesized initially as an inactive proenzyme. Formation of the active enzyme involves a self-maturation process in which the active site pyruvoyl group is generated from an internal serine residue via an autocatalytic post-translational modification. Two non-identical subunits are generated from the proenzyme in this reaction, and the pyruvate is formed at the N-terminus of the alpha chain, which is derived from the carboxyl end of the proenzyme. The post-translation cleavage follows an unusual pathway, termed non-hydrolytic serinolysis, in which the side chain hydroxyl group of the serine supplies its oxygen atom to form the C-terminus of the beta chain, while the remainder of the serine residue undergoes an oxidative deamination to produce ammonia and the pyruvoyl group blocking the N-terminus of the alpha chain.

It catalyses the reaction S-adenosyl-L-methionine + H(+) = S-adenosyl 3-(methylsulfanyl)propylamine + CO2. The protein operates within amine and polyamine biosynthesis; S-adenosylmethioninamine biosynthesis; S-adenosylmethioninamine from S-adenosyl-L-methionine: step 1/1. In terms of biological role, catalyzes the decarboxylation of S-adenosylmethionine to S-adenosylmethioninamine (dcAdoMet), the propylamine donor required for the synthesis of the polyamines spermine and spermidine from the diamine putrescine. This chain is S-adenosylmethionine decarboxylase proenzyme, found in Shigella boydii serotype 4 (strain Sb227).